The following is a 340-amino-acid chain: MTNSLRVAVLGGGSFGTAIANIIAANGHHTYLWMRDEDRAEKCQFERENPEYLPGYKLNDNLEITSDLVASVADADVVTLSVPSQSFREVARRVAPHIPENAIVLSTTKGIEGESFLLMSQILEQELGNVRIGVLSGPNFAKEIIQNQFTGSVIASEHDSVIQCIQQVFASKTFRIYANTDRYGVELGGALKNIYAIVTGMAAALGCGSNTQAMLLTRSLAEMTRLATALGANGMTFLGLAGVGDLILTCTSDLSRNYRVGYAIGKGESLAQVLDNIGQVAEGVNTVKIVKDKADEMGIYMPLVTGLHEVLFEGKDILEVVTGLMTGAMASDVDMQGGVQ.

NADPH is bound by residues S14, F15, R35, and K109. Residues K109 and G137 each contribute to the sn-glycerol 3-phosphate site. A141 contributes to the NADPH binding site. Sn-glycerol 3-phosphate-binding residues include K192, D245, S255, R256, and N257. K192 acts as the Proton acceptor in catalysis. An NADPH-binding site is contributed by R256. NADPH-binding residues include V280 and E282.

The protein belongs to the NAD-dependent glycerol-3-phosphate dehydrogenase family.

It is found in the cytoplasm. It carries out the reaction sn-glycerol 3-phosphate + NAD(+) = dihydroxyacetone phosphate + NADH + H(+). The catalysed reaction is sn-glycerol 3-phosphate + NADP(+) = dihydroxyacetone phosphate + NADPH + H(+). It participates in membrane lipid metabolism; glycerophospholipid metabolism. In terms of biological role, catalyzes the reduction of the glycolytic intermediate dihydroxyacetone phosphate (DHAP) to sn-glycerol 3-phosphate (G3P), the key precursor for phospholipid synthesis. The sequence is that of Glycerol-3-phosphate dehydrogenase [NAD(P)+] from Teredinibacter turnerae (strain ATCC 39867 / T7901).